We begin with the raw amino-acid sequence, 192 residues long: Crossover junction endodeoxyribonuclease RuvC (192 aa).

Residues Asp7, Glu67, and Asp140 contribute to the active site. Mg(2+) is bound by residues Asp7, Glu67, and Asp140. The tract at residues 158–192 is disordered; the sequence is RQSGVPPRTNSRRKSGTGGSWEQFVRQSPNVVVRS. Over residues 182–192 the composition is skewed to polar residues; it reads VRQSPNVVVRS.

It belongs to the RuvC family. As to quaternary structure, homodimer which binds Holliday junction (HJ) DNA. The HJ becomes 2-fold symmetrical on binding to RuvC with unstacked arms; it has a different conformation from HJ DNA in complex with RuvA. In the full resolvosome a probable DNA-RuvA(4)-RuvB(12)-RuvC(2) complex forms which resolves the HJ. Requires Mg(2+) as cofactor.

It localises to the cytoplasm. It carries out the reaction Endonucleolytic cleavage at a junction such as a reciprocal single-stranded crossover between two homologous DNA duplexes (Holliday junction).. The RuvA-RuvB-RuvC complex processes Holliday junction (HJ) DNA during genetic recombination and DNA repair. Endonuclease that resolves HJ intermediates. Cleaves cruciform DNA by making single-stranded nicks across the HJ at symmetrical positions within the homologous arms, yielding a 5'-phosphate and a 3'-hydroxyl group; requires a central core of homology in the junction. The consensus cleavage sequence is 5'-(A/T)TT(C/G)-3'. Cleavage occurs on the 3'-side of the TT dinucleotide at the point of strand exchange. HJ branch migration catalyzed by RuvA-RuvB allows RuvC to scan DNA until it finds its consensus sequence, where it cleaves and resolves the cruciform DNA. This chain is Crossover junction endodeoxyribonuclease RuvC, found in Chlorobium chlorochromatii (strain CaD3).